The chain runs to 214 residues: uncharacterized protein (214 aa).

A run of 4 helical transmembrane segments spans residues 10–30, 55–75, 147–167, and 174–194; these read IPPL…SLGI, IGVG…GYAI, VSGA…AGMA, and RFSW…AILL.

The protein belongs to the DedA family.

The protein resides in the cell membrane. This is an uncharacterized protein from Mycobacterium leprae (strain TN).